The chain runs to 257 residues: S-methyl-5'-thioadenosine phosphorylase (257 aa).

Phosphate contacts are provided by residues Ser10 and 50–51 (RH). The cysteines at positions 130 and 195 are disulfide-linked. Residue Met180 participates in substrate binding. Position 181 (Thr181) interacts with phosphate. Substrate is bound at residue 204–206 (DYD). A disulfide bridge links Cys246 with Cys248.

The protein belongs to the PNP/MTAP phosphorylase family. MTAP subfamily. In terms of assembly, homohexamer. Dimer of a homotrimer.

It catalyses the reaction S-methyl-5'-thioadenosine + phosphate = 5-(methylsulfanyl)-alpha-D-ribose 1-phosphate + adenine. It participates in amino-acid biosynthesis; L-methionine biosynthesis via salvage pathway; S-methyl-5-thio-alpha-D-ribose 1-phosphate from S-methyl-5'-thioadenosine (phosphorylase route): step 1/1. Its function is as follows. Catalyzes the reversible phosphorylation of S-methyl-5'-thioadenosine (MTA) to adenine and 5-methylthioribose-1-phosphate. Involved in the breakdown of MTA, a major by-product of polyamine biosynthesis. Responsible for the first step in the methionine salvage pathway after MTA has been generated from S-adenosylmethionine. Has broad substrate specificity with 6-aminopurine nucleosides as preferred substrates. The sequence is that of S-methyl-5'-thioadenosine phosphorylase from Pyrococcus furiosus (strain ATCC 43587 / DSM 3638 / JCM 8422 / Vc1).